The chain runs to 445 residues: Chromosomal replication initiator protein DnaA (445 aa).

Residues methionine 1–threonine 73 form a domain I, interacts with DnaA modulators region. The domain II stretch occupies residues threonine 73–glycine 102. Residues asparagine 103–alanine 323 form a domain III, AAA+ region region. The ATP site is built by glycine 147, glycine 149, lysine 150, and threonine 151. The segment at glutamine 324–lysine 445 is domain IV, binds dsDNA.

Belongs to the DnaA family. Oligomerizes as a right-handed, spiral filament on DNA at oriC.

The protein resides in the cytoplasm. Functionally, plays an essential role in the initiation and regulation of chromosomal replication. ATP-DnaA binds to the origin of replication (oriC) to initiate formation of the DNA replication initiation complex once per cell cycle. Binds the DnaA box (a 9 base pair repeat at the origin) and separates the double-stranded (ds)DNA. Forms a right-handed helical filament on oriC DNA; dsDNA binds to the exterior of the filament while single-stranded (ss)DNA is stabiized in the filament's interior. The ATP-DnaA-oriC complex binds and stabilizes one strand of the AT-rich DNA unwinding element (DUE), permitting loading of DNA polymerase. After initiation quickly degrades to an ADP-DnaA complex that is not apt for DNA replication. Binds acidic phospholipids. The polypeptide is Chromosomal replication initiator protein DnaA (Acholeplasma laidlawii).